The primary structure comprises 234 residues: NLP effector protein 1 (234 aa).

An N-terminal signal peptide occupies residues 1–18; it reads MQLRAFISVFASLACVNA. An N-linked (GlcNAc...) asparagine glycan is attached at Asn66. A Conserved undecapeptide motif I motif is present at residues 102–112; the sequence is AFMYSWYMPKD. Positions 119 to 125 match the Hepta-peptide GHRHDWE motif II motif; sequence GHRHDWE.

The protein belongs to the Necrosis inducing protein (NPP1) family.

The protein resides in the secreted. In terms of biological role, secreted effector that contributes to virulence during infection by P.capsici. Induces distinct chlorosis at 3 days after inoculation of host C.annuum leaves, and all the chlorotic areas gradually turn brown and become moderately necrotic at 7 days after inoculation. Leads only to chlorotic areas, without necrosis at 7 days after non-host N.benthamiana leaves infection. Induces cell death in hot pepper. This is NLP effector protein 1 from Phytophthora capsici.